We begin with the raw amino-acid sequence, 410 residues long: Multidrug resistance protein MdtA (410 aa).

Positions 1 to 21 are cleaved as a signal peptide; it reads MNNRYPVMKKGLIVLVVIAVA. Residues 36 to 56 form a disordered region; the sequence is SDGDLSGQSAHGKRGNGAHKP.

The protein belongs to the membrane fusion protein (MFP) (TC 8.A.1) family. Part of a tripartite efflux system composed of MdtA, MdtB and MdtC.

The protein resides in the cell inner membrane. This chain is Multidrug resistance protein MdtA, found in Pantoea ananatis (strain AJ13355).